Consider the following 81-residue polypeptide: MSHTVKIYDTCIGCTQCVRACPTDVLEMVPWDGCKSGQIASSPRVEDCVGCKRCETACPTDFLSVRVYLGAETTRSLGLAY.

4Fe-4S ferredoxin-type domains follow at residues 2-31 and 37-68; these read SHTV…MVPW and GQIA…VRVY. The [4Fe-4S] cluster site is built by cysteine 11, cysteine 14, cysteine 17, cysteine 21, cysteine 48, cysteine 51, cysteine 54, and cysteine 58.

In terms of assembly, the eukaryotic PSI reaction center is composed of at least 11 subunits. It depends on [4Fe-4S] cluster as a cofactor.

It localises to the plastid. It is found in the chloroplast thylakoid membrane. It catalyses the reaction reduced [plastocyanin] + hnu + oxidized [2Fe-2S]-[ferredoxin] = oxidized [plastocyanin] + reduced [2Fe-2S]-[ferredoxin]. Functionally, apoprotein for the two 4Fe-4S centers FA and FB of photosystem I (PSI); essential for photochemical activity. FB is the terminal electron acceptor of PSI, donating electrons to ferredoxin. The C-terminus interacts with PsaA/B/D and helps assemble the protein into the PSI complex. Required for binding of PsaD and PsaE to PSI. PSI is a plastocyanin/cytochrome c6-ferredoxin oxidoreductase, converting photonic excitation into a charge separation, which transfers an electron from the donor P700 chlorophyll pair to the spectroscopically characterized acceptors A0, A1, FX, FA and FB in turn. This Thalassiosira pseudonana (Marine diatom) protein is Photosystem I iron-sulfur center.